A 287-amino-acid polypeptide reads, in one-letter code: Co-chaperone protein DjlA (287 aa).

The Periplasmic portion of the chain corresponds to 1 to 6 (MQIFGK). A helical transmembrane segment spans residues 7–30 (ILGAFFGFLFGGVFGALFGLFIGH). Over 31-287 (QFDKARRLSQ…DLIKKEKGFK (257 aa)) the chain is Cytoplasmic. The disordered stretch occupies residues 192–213 (GGFGGQQHQSHHSSSHGGWQQA). Positions 221–287 (DAYKILGIDA…DLIKKEKGFK (67 aa)) constitute a J domain.

Homodimer.

The protein resides in the cell inner membrane. Its function is as follows. Regulatory DnaK co-chaperone. Direct interaction between DnaK and DjlA is needed for the induction of the wcaABCDE operon, involved in the synthesis of a colanic acid polysaccharide capsule, possibly through activation of the RcsB/RcsC phosphotransfer signaling pathway. The colanic acid capsule may help the bacterium survive conditions outside the host. This Vibrio vulnificus (strain CMCP6) protein is Co-chaperone protein DjlA.